Consider the following 2158-residue polypeptide: Non-reducing polyketide synthase Preu8 (2158 aa).

The segment at 4 to 241 (LVLGDQVADH…TPIPVFAPYH (238 aa)) is N-terminal acylcarrier protein transacylase domain (SAT). The 433-residue stretch at 369-801 (NDKIAIVGMS…GGNTAIILED (433 aa)) folds into the Ketosynthase family 3 (KS3) domain. Residues Cys-541, His-676, and His-719 each act as for beta-ketoacyl synthase activity in the active site. Positions 900-1215 (FTFTGQGSQY…ANSVSTLFLA (316 aa)) are malonyl-CoA:ACP transacylase (MAT) domain. Ser-989 serves as the catalytic For acyl/malonyl transferase activity. The interval 1285–1603 (SCQRIVREEL…RRVLNIMMPP (319 aa)) is product template (PT) domain. The interval 1287 to 1423 (QRIVREELHA…GTVKYEDVSQ (137 aa)) is N-terminal hotdog fold. Positions 1287–1598 (QRIVREELHA…FQNIARRVLN (312 aa)) constitute a PKS/mFAS DH domain. His-1319 acts as the Proton acceptor; for dehydratase activity in catalysis. The tract at residues 1451-1598 (AHKVLRGMAY…FQNIARRVLN (148 aa)) is C-terminal hotdog fold. The Proton donor; for dehydratase activity role is filled by Asp-1511. A compositionally biased stretch (low complexity) spans 1619 to 1639 (KKAASPTLAPAKAAKPAAKTS). A disordered region spans residues 1619–1654 (KKAASPTLAPAKAAKPAAKTSKPSKARAKPAADSTT). Positions 1651–1725 (DSTTSRVMKI…QMKKFFSQYD (75 aa)) constitute a Carrier 1 domain. Ser-1685 is modified (O-(pantetheine 4'-phosphoryl)serine). The tract at residues 1723 to 1779 (QYDGAPIPDDGDDSDGTDEPSNFSTPSYGADNASTPPSSAPSVNGKSSPENHEVLES) is disordered. A compositionally biased stretch (acidic residues) spans 1731-1740 (DDGDDSDGTD). Positions 1743–1770 (SNFSTPSYGADNASTPPSSAPSVNGKSS) are enriched in polar residues. The Carrier 2 domain maps to 1779 to 1853 (STEVSLARKI…DIENELGMRP (75 aa)). Ser-1813 bears the O-(pantetheine 4'-phosphoryl)serine mark. Residues 1847–1879 (NELGMRPKPKPKAEAAPPKSSAKASPSANKQPQ) are disordered. A compositionally biased stretch (low complexity) spans 1860–1876 (EAAPPKSSAKASPSANK). Residues 1894 to 2144 (SQYPPANSVL…NHFTMMKGDH (251 aa)) are thioesterase (TE) domain.

Pantetheine 4'-phosphate serves as cofactor.

Its function is as follows. Non-reducing polyketide synthase; part of a gene cluster that mediates the biosynthesis of a yet unidentified natural product. The sequence is that of Non-reducing polyketide synthase Preu8 from Preussia isomera (Coprophilous fungus).